A 230-amino-acid polypeptide reads, in one-letter code: Cytochrome c oxidase subunit 2 (230 aa).

At 1–14 (MAHPSQLGFQDAAS) the chain is on the mitochondrial intermembrane side. Residues 15–45 (PVMEELLHFHDHALMIVFLISTLVLYIIAAT) traverse the membrane as a helical segment. The Mitochondrial matrix segment spans residues 46 to 59 (ASTKLTDKYILDSQ). A helical transmembrane segment spans residues 60–87 (EIEVIWTIMPAVILILIALPSLRILYLM). Residues 88 to 230 (DEINDPHLTV…NWSSLMLEDA (143 aa)) are Mitochondrial intermembrane-facing. The Cu cation site is built by histidine 161, cysteine 196, glutamate 198, cysteine 200, histidine 204, and methionine 207. Position 198 (glutamate 198) interacts with Mg(2+).

It belongs to the cytochrome c oxidase subunit 2 family. In terms of assembly, component of the cytochrome c oxidase (complex IV, CIV), a multisubunit enzyme composed of 14 subunits. The complex is composed of a catalytic core of 3 subunits MT-CO1, MT-CO2 and MT-CO3, encoded in the mitochondrial DNA, and 11 supernumerary subunits COX4I, COX5A, COX5B, COX6A, COX6B, COX6C, COX7A, COX7B, COX7C, COX8 and NDUFA4, which are encoded in the nuclear genome. The complex exists as a monomer or a dimer and forms supercomplexes (SCs) in the inner mitochondrial membrane with NADH-ubiquinone oxidoreductase (complex I, CI) and ubiquinol-cytochrome c oxidoreductase (cytochrome b-c1 complex, complex III, CIII), resulting in different assemblies (supercomplex SCI(1)III(2)IV(1) and megacomplex MCI(2)III(2)IV(2)). Found in a complex with TMEM177, COA6, COX18, COX20, SCO1 and SCO2. Interacts with TMEM177 in a COX20-dependent manner. Interacts with COX20. Interacts with COX16. Cu cation is required as a cofactor.

The protein resides in the mitochondrion inner membrane. It carries out the reaction 4 Fe(II)-[cytochrome c] + O2 + 8 H(+)(in) = 4 Fe(III)-[cytochrome c] + 2 H2O + 4 H(+)(out). Component of the cytochrome c oxidase, the last enzyme in the mitochondrial electron transport chain which drives oxidative phosphorylation. The respiratory chain contains 3 multisubunit complexes succinate dehydrogenase (complex II, CII), ubiquinol-cytochrome c oxidoreductase (cytochrome b-c1 complex, complex III, CIII) and cytochrome c oxidase (complex IV, CIV), that cooperate to transfer electrons derived from NADH and succinate to molecular oxygen, creating an electrochemical gradient over the inner membrane that drives transmembrane transport and the ATP synthase. Cytochrome c oxidase is the component of the respiratory chain that catalyzes the reduction of oxygen to water. Electrons originating from reduced cytochrome c in the intermembrane space (IMS) are transferred via the dinuclear copper A center (CU(A)) of subunit 2 and heme A of subunit 1 to the active site in subunit 1, a binuclear center (BNC) formed by heme A3 and copper B (CU(B)). The BNC reduces molecular oxygen to 2 water molecules using 4 electrons from cytochrome c in the IMS and 4 protons from the mitochondrial matrix. The polypeptide is Cytochrome c oxidase subunit 2 (mt-co2) (Tetraodon nigroviridis (Spotted green pufferfish)).